The following is a 78-amino-acid chain: UPF0270 protein PC1_3850 (78 aa).

Belongs to the UPF0270 family.

This Pectobacterium carotovorum subsp. carotovorum (strain PC1) protein is UPF0270 protein PC1_3850.